A 329-amino-acid chain; its full sequence is DNA-directed RNA polymerase subunit alpha (329 aa).

Residues 1–235 (MQGSVTEFLK…EQLEAFVDLR (235 aa)) form an alpha N-terminal domain (alpha-NTD) region. Positions 249–329 (FDPILLRPVD…NWPPASIADE (81 aa)) are alpha C-terminal domain (alpha-CTD).

The protein belongs to the RNA polymerase alpha chain family. In terms of assembly, homodimer. The RNAP catalytic core consists of 2 alpha, 1 beta, 1 beta' and 1 omega subunit. When a sigma factor is associated with the core the holoenzyme is formed, which can initiate transcription.

The catalysed reaction is RNA(n) + a ribonucleoside 5'-triphosphate = RNA(n+1) + diphosphate. DNA-dependent RNA polymerase catalyzes the transcription of DNA into RNA using the four ribonucleoside triphosphates as substrates. This is DNA-directed RNA polymerase subunit alpha from Yersinia pestis bv. Antiqua (strain Antiqua).